A 160-amino-acid chain; its full sequence is Growth arrest and DNA damage-inducible protein GADD45 beta (160 aa).

It belongs to the GADD45 family. As to quaternary structure, interacts with GADD45GIP1.

Functionally, involved in the regulation of growth and apoptosis. Mediates activation of stress-responsive MTK1/MEKK4 MAPKKK. This chain is Growth arrest and DNA damage-inducible protein GADD45 beta (GADD45B), found in Bos taurus (Bovine).